Consider the following 276-residue polypeptide: Sulfur carrier protein FdhD (276 aa).

Cys-120 acts as the Cysteine persulfide intermediate in catalysis.

This sequence belongs to the FdhD family.

It localises to the cytoplasm. Functionally, required for formate dehydrogenase (FDH) activity. Acts as a sulfur carrier protein that transfers sulfur from IscS to the molybdenum cofactor prior to its insertion into FDH. This chain is Sulfur carrier protein FdhD, found in Bordetella parapertussis (strain 12822 / ATCC BAA-587 / NCTC 13253).